The primary structure comprises 290 residues: Nucleotide-binding protein Bpet0443 (290 aa).

9 to 16 (GISGSGKS) contacts ATP. Residue 58–61 (DVRS) coordinates GTP.

It belongs to the RapZ-like family.

In terms of biological role, displays ATPase and GTPase activities. The protein is Nucleotide-binding protein Bpet0443 of Bordetella petrii (strain ATCC BAA-461 / DSM 12804 / CCUG 43448).